The chain runs to 331 residues: D-galactose/methyl-galactoside binding periplasmic protein MglB (331 aa).

The N-terminal stretch at 1-24 is a signal peptide; it reads MKKTAVLSTVAFAIALGSASASFA. 2 residues coordinate beta-D-galactose: D38 and N115. Residues D38 and N115 each contribute to the beta-D-glucose site. The Ca(2+) site is built by D158, N160, D162, K164, and Q166. 3 residues coordinate beta-D-galactose: H176, D178, and R182. Beta-D-glucose-binding residues include H176, D178, and R182. Residue E229 participates in Ca(2+) binding. Residues N235, D259, and N279 each contribute to the beta-D-galactose site. Beta-D-glucose-binding residues include N235, D259, and N279.

The protein belongs to the bacterial solute-binding protein 2 family. As to quaternary structure, the ABC transporter complex is composed of one ATP-binding protein (MglA), two transmembrane proteins (MglC) and a solute-binding protein (MglB).

The protein resides in the periplasm. Part of the ABC transporter complex MglABC involved in galactose/methyl galactoside import. The sequence is that of D-galactose/methyl-galactoside binding periplasmic protein MglB (mglB) from Haemophilus influenzae (strain ATCC 51907 / DSM 11121 / KW20 / Rd).